Reading from the N-terminus, the 570-residue chain is Probable metalloreductase AIM14 (570 aa).

Transmembrane regions (helical) follow at residues 21-41 (IKYG…LALL), 70-90 (AIHL…HYSL), 101-118 (LGRL…LTLR), 142-162 (IITV…AIDD), 177-197 (FVGF…IGPM), 204-224 (LFYI…PIHS), and 230-250 (FPFL…RIVF). The 119-residue stretch at 101-219 (LGRLSYALIP…NLVNVAFILL (119 aa)) folds into the Ferric oxidoreductase domain. One can recognise an FAD-binding FR-type domain in the interval 250-388 (FAKSLMILNK…GGSGISFALP (139 aa)). Over residues 481 to 505 (SNFNSENADSNDNTPETSHSPTKEN) the composition is skewed to polar residues. The segment at 481–507 (SNFNSENADSNDNTPETSHSPTKENGS) is disordered.

Belongs to the ferric reductase (FRE) family. AIM14 subfamily. Interacts with ribosomes.

Its subcellular location is the membrane. Its function is as follows. Probable cell surface metalloreductase. May be involved in iron or copper homeostasis. This chain is Probable metalloreductase AIM14 (AIM14), found in Saccharomyces cerevisiae (strain RM11-1a) (Baker's yeast).